Reading from the N-terminus, the 162-residue chain is Protein mmf1, mitochondrial (162 aa).

This sequence belongs to the RutC family.

The protein localises to the mitochondrion. It localises to the cytoplasm. Functionally, plays a role in the maintenance of mitochondrial DNA. In Schizosaccharomyces pombe (strain 972 / ATCC 24843) (Fission yeast), this protein is Protein mmf1, mitochondrial (mmf1).